The following is a 554-amino-acid chain: Apyrase (554 aa).

Residues 1 to 21 (MFKITVFIYVLQLILPSKVHS) form the signal peptide. Residues Asp43, His45, Asp92, Asn124, His224, and His248 each coordinate a divalent metal cation. Positions 358, 394, 399, 418, 504, and 510 each coordinate AMP.

Belongs to the 5'-nucleotidase family. The cofactor is a divalent metal cation. As to expression, salivary gland (at protein level).

Its subcellular location is the secreted. It catalyses the reaction a ribonucleoside 5'-triphosphate + 2 H2O = a ribonucleoside 5'-phosphate + 2 phosphate + 2 H(+). Facilitates hematophagy by inhibiting ADP-dependent platelet aggregation in the host. Cleaves adenosine triphosphate (ATP) and adenosine diphosphate (ADP) to adenosine monophosphate (AMP) and inorganic phosphate. Shows potential for antithrombotic activity. Can induce basophil activation. May reduce probing time by facilitating the speed of locating blood. The protein is Apyrase of Tabanus yao (Horsefly).